A 188-amino-acid polypeptide reads, in one-letter code: Ubiquitin-like protein 4B (188 aa).

One can recognise a Ubiquitin-like domain in the interval 1-76; it reads MFLTVKLLLG…INVIMRPPED (76 aa). Positions 146–188 are disordered; sequence EEKEAPAVASELEQNNGGGGGGGGTGGEGGGKKEEEEGEEADQ. The span at 161–174 shows a compositional bias: gly residues; the sequence is NGGGGGGGGTGGEG.

In terms of tissue distribution, expressed specifically in post-meiotic male germ cells of the testis. Abundantly expressed in stage 14-16 spermatids.

It is found in the cytoplasm. This is Ubiquitin-like protein 4B (Ubl4b) from Mus musculus (Mouse).